Consider the following 369-residue polypeptide: N-succinylamino acid racemase (369 aa).

Catalysis depends on Lys163, which acts as the Proton donor. Mg(2+) contacts are provided by Asp188, Glu213, and Asp238. The Proton acceptor role is filled by Lys262.

Belongs to the mandelate racemase/muconate lactonizing enzyme family. MenC type 2 subfamily. As to quaternary structure, homooctamer. Tetramer of dimers. A divalent metal cation is required as a cofactor.

The enzyme catalyses (1R,6R)-6-hydroxy-2-succinyl-cyclohexa-2,4-diene-1-carboxylate = 2-succinylbenzoate + H2O. In terms of biological role, acts as a N-succinylamino acid racemase (NSAR) that catalyzes the racemization of N-succinyl-L-phenylglycine. Also converts 2-succinyl-6-hydroxy-2,4-cyclohexadiene-1-carboxylate (SHCHC) to 2-succinylbenzoate (OSB). Catalyzes both N-succinylamino acid racemization and OSB synthesis at equivalent rates. However, NSAR activity is probably the protein's biological function, because menaquinone biosynthesis genes are missing in this species. This chain is N-succinylamino acid racemase, found in Thermus thermophilus (strain ATCC 27634 / DSM 579 / HB8).